A 511-amino-acid chain; its full sequence is Spermatogenesis-associated protein 2 (511 aa).

In terms of domain architecture, PUB spans 77–149; that stretch reads ALHCAFSMLE…AYKLKELVES (73 aa). A PIM motif motif is present at residues 320–337; it reads TYFPTQDDVDLYTDSEPR.

Belongs to the SPATA2 family. In terms of assembly, interacts (via the PIM motif) with RNF31/HOIP (via the PUB domain); the interaction is direct. Interacts (via the PUB domain) with CYLD; the interaction is direct. As to expression, expressed in the testis and to a lesser extent in the brain, while skeletal muscle and kidney show weak expression.

The protein resides in the cytoplasm. It localises to the nucleus. In terms of biological role, bridging factor that mediates the recruitment of CYLD to the LUBAC complex, thereby regulating TNF-alpha-induced necroptosis. Acts as a direct binding intermediate that bridges RNF31/HOIP, the catalytic subunit of the LUBAC complex, and the deubiquitinase (CYLD), thereby recruiting CYLD to the TNF-R1 signaling complex (TNF-RSC). Required to activate the 'Met-1'- (linear) and 'Lys-63'-linked deubiquitinase activities of CYLD. Controls the kinase activity of RIPK1 and TNF-alpha-induced necroptosis by promoting 'Met-1'-linked deubiquitination of RIPK1 by CYLD. This is Spermatogenesis-associated protein 2 from Rattus norvegicus (Rat).